We begin with the raw amino-acid sequence, 280 residues long: Cell division protein SepF (280 aa).

A disordered region spans residues 22 to 117 (DYVDDRAPRA…DDYPEDAYGE (96 aa)). 2 stretches are compositionally biased toward basic and acidic residues: residues 25 to 36 (DDRAPRASERGG) and 53 to 83 (RYGE…GADR).

It belongs to the SepF family. Homodimer. Interacts with FtsZ.

Its subcellular location is the cytoplasm. Cell division protein that is part of the divisome complex and is recruited early to the Z-ring. Probably stimulates Z-ring formation, perhaps through the cross-linking of FtsZ protofilaments. Its function overlaps with FtsA. The protein is Cell division protein SepF of Nocardia farcinica (strain IFM 10152).